The following is a 100-amino-acid chain: Urease subunit gamma (100 aa).

This sequence belongs to the urease gamma subunit family. Heterotrimer of UreA (gamma), UreB (beta) and UreC (alpha) subunits. Three heterotrimers associate to form the active enzyme.

The protein localises to the cytoplasm. The catalysed reaction is urea + 2 H2O + H(+) = hydrogencarbonate + 2 NH4(+). It functions in the pathway nitrogen metabolism; urea degradation; CO(2) and NH(3) from urea (urease route): step 1/1. This chain is Urease subunit gamma, found in Polynucleobacter asymbioticus (strain DSM 18221 / CIP 109841 / QLW-P1DMWA-1) (Polynucleobacter necessarius subsp. asymbioticus).